The chain runs to 139 residues: Flagellar assembly factor FliW 2 (139 aa).

The protein belongs to the FliW family. Interacts with translational regulator CsrA and flagellin(s).

The protein resides in the cytoplasm. In terms of biological role, acts as an anti-CsrA protein, binds CsrA and prevents it from repressing translation of its target genes, one of which is flagellin. Binds to flagellin and participates in the assembly of the flagellum. The polypeptide is Flagellar assembly factor FliW 2 (Helicobacter hepaticus (strain ATCC 51449 / 3B1)).